The primary structure comprises 704 residues: Fatty acid oxidation complex subunit alpha (704 aa).

Residues 1-190 form an enoyl-CoA hydratase region; it reads MSEQKAFSLK…KLGVVDACVP (190 aa). The tract at residues 308-704 is 3-hydroxyacyl-CoA dehydrogenase; the sequence is TAVNKVGVLG…RAGEGRNFYD (397 aa).

It in the N-terminal section; belongs to the enoyl-CoA hydratase/isomerase family. This sequence in the central section; belongs to the 3-hydroxyacyl-CoA dehydrogenase family. As to quaternary structure, heterotetramer of two alpha chains (FadJ) and two beta chains (FadI).

It localises to the cytoplasm. It carries out the reaction a (3S)-3-hydroxyacyl-CoA = a (2E)-enoyl-CoA + H2O. It catalyses the reaction a 4-saturated-(3S)-3-hydroxyacyl-CoA = a (3E)-enoyl-CoA + H2O. The catalysed reaction is a (3S)-3-hydroxyacyl-CoA + NAD(+) = a 3-oxoacyl-CoA + NADH + H(+). The enzyme catalyses (3S)-3-hydroxybutanoyl-CoA = (3R)-3-hydroxybutanoyl-CoA. Its pathway is lipid metabolism; fatty acid beta-oxidation. Functionally, catalyzes the formation of a hydroxyacyl-CoA by addition of water on enoyl-CoA. Also exhibits 3-hydroxyacyl-CoA epimerase and 3-hydroxyacyl-CoA dehydrogenase activities. The sequence is that of Fatty acid oxidation complex subunit alpha from Vibrio campbellii (strain ATCC BAA-1116).